The following is a 419-amino-acid chain: DNA-directed RNA polymerase I subunit RPA49 (419 aa).

Phosphoserine occurs at positions 35 and 163. K373 carries the N6-acetyllysine modification. Residues 397 to 419 (GTLSLPLPPAQTSDRLAKRRKIT) form a disordered region.

Belongs to the eukaryotic RPA49/POLR1E RNA polymerase subunit family. In terms of assembly, component of the RNA polymerase I (Pol I) complex consisting of 13 subunits: a ten-subunit catalytic core composed of POLR1A/RPA1, POLR1B/RPA2, POLR1C/RPAC1, POLR1D/RPAC2, POLR1H/RPA12, POLR2E/RPABC1, POLR2F/RPABC2, POLR2H/RPABC3, POLR2K/RPABC4 and POLR2L/RPABC5; a mobile stalk subunit POLR1F/RPA43 protruding from the core and additional subunits homologous to general transcription factors POLR1E/RPA49 and POLR1G/RPA34. Forms a heterodimer with POLR1G/RPA34. Interacts with POLR1G. Also binds UBTF/UBF. Interacts with PWP1. Acetylated at Lys-373 by CREBBP/CBP, leading to decreased RNA polymerase I transcription. In normal conditions, deacetylated by SIRT7, promoting the association of RNA polymerase I with the rDNA promoter region and coding region. In response to stress, SIRT7 is released from nucleoli leading to hyperacetylation of POLR1E/PAF53 and decreased association of RNA polymerase I with the rDNA promoter region.

Its subcellular location is the nucleus. The protein resides in the nucleolus. Its function is as follows. Component of RNA polymerase I (Pol I), a DNA-dependent RNA polymerase which synthesizes ribosomal RNA precursors using the four ribonucleoside triphosphates as substrates. Appears to be involved in the formation of the initiation complex at the promoter by mediating the interaction between Pol I and UBTF/UBF. The chain is DNA-directed RNA polymerase I subunit RPA49 (POLR1E) from Homo sapiens (Human).